Here is a 371-residue protein sequence, read N- to C-terminus: MCAKKIVVLPGDHIGPEIVASALEVLKVVEKKRPELKLEFEEHKIGGASIDAYGTPLTDETVKACLEADGVLLGAVGGPEWTNPNCRPEQGLLKLRKSMGVWANLRPCNFASKSLVKYSPLKPEIVEGVDFCVVRELTGGCYFGERTEDNGSGYAMDTWPYSLEEVSRIARLAAWLAETSNPPAPVTLLDKANVLATSRLWRKTVAKIFKEEYPHLTLKNQLIDSAAMLLVKSPRTLNGVVLTDNLFGDIISDEASVIPGSLGLLPSASLSGVVGKSEEKVHCLVEPIHGSAPDIAGKGIVNPVGTILSASLLLRYGLNAPKEAEAIEAAVRKVLDDTSIGGRGLYTRDLGGEASTADITKAVVEELEKIL.

Threonine 55 is subject to Phosphothreonine. 78 to 89 (GPEWTNPNCRPE) is a binding site for NAD(+). Substrate-binding residues include arginine 96, arginine 106, arginine 135, and aspartate 224. Residues aspartate 224, aspartate 249, and aspartate 253 each contribute to the Mg(2+) site. 290-302 (GSAPDIAGKGIVN) contributes to the NAD(+) binding site.

It belongs to the isocitrate and isopropylmalate dehydrogenases family. In terms of assembly, homodimer. Requires Mg(2+) as cofactor. Mn(2+) serves as cofactor.

Its subcellular location is the cytoplasm. The catalysed reaction is (2R,3S)-3-isopropylmalate + NAD(+) = 4-methyl-2-oxopentanoate + CO2 + NADH. The protein operates within amino-acid biosynthesis; L-leucine biosynthesis; L-leucine from 3-methyl-2-oxobutanoate: step 3/4. Catalyzes the oxidation of 3-carboxy-2-hydroxy-4-methylpentanoate (3-isopropylmalate) to 3-carboxy-4-methyl-2-oxopentanoate. The product decarboxylates to 4-methyl-2 oxopentanoate. In Schizosaccharomyces pombe (strain 972 / ATCC 24843) (Fission yeast), this protein is 3-isopropylmalate dehydrogenase (leu1).